A 168-amino-acid polypeptide reads, in one-letter code: Dihydrofolate reductase (168 aa).

Positions 1–159 (MISFIFAMDA…YDYEFLMYEK (159 aa)) constitute a DHFR domain. Substrate is bound at residue 5-7 (IFA). NADP(+) is bound by residues 6 to 7 (FA) and 14 to 19 (IGKDND). Aspartate 27 lines the substrate pocket. Residue 43-46 (GRKT) coordinates NADP(+). Residue arginine 57 participates in substrate binding. NADP(+) contacts are provided by residues 62 to 65 (VTSA) and 95 to 100 (IGGAQL). Threonine 114 provides a ligand contact to substrate.

The protein belongs to the dihydrofolate reductase family.

The enzyme catalyses (6S)-5,6,7,8-tetrahydrofolate + NADP(+) = 7,8-dihydrofolate + NADPH + H(+). It functions in the pathway cofactor biosynthesis; tetrahydrofolate biosynthesis; 5,6,7,8-tetrahydrofolate from 7,8-dihydrofolate: step 1/1. Its function is as follows. Key enzyme in folate metabolism. Catalyzes an essential reaction for de novo glycine and purine synthesis, and for DNA precursor synthesis. This Bacillus subtilis (strain 168) protein is Dihydrofolate reductase (dfrA).